Here is a 285-residue protein sequence, read N- to C-terminus: Eukaryotic translation initiation factor 3 subunit F-2 (285 aa).

The region spanning 11–145 (VFIKPLVLFQ…TRLYCAVEIG (135 aa)) is the MPN domain.

It belongs to the eIF-3 subunit F family. In terms of assembly, component of the eukaryotic translation initiation factor 3 (eIF-3) complex. The eIF-3 complex interacts with pix.

The protein resides in the cytoplasm. Its function is as follows. Component of the eukaryotic translation initiation factor 3 (eIF-3) complex, which is involved in protein synthesis of a specialized repertoire of mRNAs and, together with other initiation factors, stimulates binding of mRNA and methionyl-tRNAi to the 40S ribosome. The eIF-3 complex specifically targets and initiates translation of a subset of mRNAs involved in cell proliferation. The sequence is that of Eukaryotic translation initiation factor 3 subunit F-2 from Drosophila yakuba (Fruit fly).